We begin with the raw amino-acid sequence, 90 residues long: Large ribosomal subunit protein uL23c (90 aa).

This sequence belongs to the universal ribosomal protein uL23 family. Part of the 50S ribosomal subunit.

It is found in the plastid. The protein resides in the chloroplast. In terms of biological role, binds to 23S rRNA. The protein is Large ribosomal subunit protein uL23c (rpl23) of Psilotum nudum (Whisk fern).